Here is a 424-residue protein sequence, read N- to C-terminus: Methylthioribose-1-phosphate isomerase (424 aa).

Aspartate 281 functions as the Proton donor in the catalytic mechanism.

It belongs to the eIF-2B alpha/beta/delta subunits family. MtnA subfamily.

It is found in the cytoplasm. Its subcellular location is the nucleus. The catalysed reaction is 5-(methylsulfanyl)-alpha-D-ribose 1-phosphate = 5-(methylsulfanyl)-D-ribulose 1-phosphate. Its pathway is amino-acid biosynthesis; L-methionine biosynthesis via salvage pathway; L-methionine from S-methyl-5-thio-alpha-D-ribose 1-phosphate: step 1/6. Functionally, catalyzes the interconversion of methylthioribose-1-phosphate (MTR-1-P) into methylthioribulose-1-phosphate (MTRu-1-P). The polypeptide is Methylthioribose-1-phosphate isomerase (Candida dubliniensis (strain CD36 / ATCC MYA-646 / CBS 7987 / NCPF 3949 / NRRL Y-17841) (Yeast)).